A 518-amino-acid polypeptide reads, in one-letter code: Lycopene epsilon cyclase, chloroplastic (518 aa).

Residue 100 to 128 (LIVIGCGPAGMSLAAEAGKRGLSVGLIGP) participates in NAD(+) binding. 2 helical membrane passes run 435-455 (FFLFGLALILQLDIDGIRIFF) and 469-489 (FLGSTLSSAGLIWFAFYMFAI).

It belongs to the lycopene cyclase family. Expressed in leaves and roots. Detected in flower buds and lips.

Its subcellular location is the plastid. It is found in the chloroplast membrane. It catalyses the reaction a carotenoid psi-end group = a carotenoid epsilon-end group. Its pathway is carotenoid biosynthesis; alpha-zeacarotene biosynthesis. It functions in the pathway carotenoid biosynthesis; delta-carotene biosynthesis. Functionally, catalyzes the single epsilon-cyclization reaction which converts lycopene to delta-carotene and neurosporene to alpha-zeacarotene. Required for lutein biosynthesis. This is Lycopene epsilon cyclase, chloroplastic from Oncidium hybrid cultivar (Orchid).